Consider the following 227-residue polypeptide: Isoprenyl transferase (227 aa).

Asp-13 is an active-site residue. Asp-13 is a binding site for Mg(2+). Residues 14-17, Trp-18, Arg-26, His-30, and 58-60 contribute to the substrate site; these read GNGR and STE. Residue Asn-61 is the Proton acceptor of the active site. Residues Trp-62, Arg-64, Arg-175, and 181 to 183 each bind substrate; that span reads RLS. Glu-194 contacts Mg(2+).

This sequence belongs to the UPP synthase family. In terms of assembly, homodimer. Requires Mg(2+) as cofactor.

In terms of biological role, catalyzes the condensation of isopentenyl diphosphate (IPP) with allylic pyrophosphates generating different type of terpenoids. This chain is Isoprenyl transferase, found in Treponema denticola (strain ATCC 35405 / DSM 14222 / CIP 103919 / JCM 8153 / KCTC 15104).